A 645-amino-acid polypeptide reads, in one-letter code: Cytochrome c oxidase subunit 1 (645 aa).

A helical membrane pass occupies residues 8–28 (LNYFYFSMWTGLSGAALATMI). Positions 31 and 36 each coordinate Ca(2+). His-54 lines the Fe(II)-heme a pocket. 8 helical membrane-spanning segments follow: residues 56–76 (LIMVFFVVVPIFFGGFANFLI), 90–110 (LNSIGFWIQPLGFLLVAKIAF), 247–267 (VLSVAVVLAGISTTISLLTLI), 282–302 (VLIPFITISLLLTLRLLAIVT), 337–357 (LFWFFGHPEVYILIIPSFGVA), 376–396 (IWAVYVMAYMGFVVWGHHMYL), 410–430 (ITIMICLPATIKLVNWTLTLA), and 438–458 (LVFLFFCSYVFFFLTGGFTGM). His-343 provides a ligand contact to Cu cation. The 1'-histidyl-3'-tyrosine (His-Tyr) cross-link spans 343–347 (HPEVY). An O2-binding site is contributed by Tyr-347. Cu cation contacts are provided by His-392 and His-393. The Mg(2+) site is built by His-470 and Asp-471. Transmembrane regions (helical) follow at residues 475–495 (VVAHFHLMLAGAAMMGAFTGL), 513–533 (FLHLVYYSAGIWTTFFPMFFL), and 555–575 (LASCGHFLTLAGVCFFFFGIF). Position 478 (His-478) interacts with heme a3. Fe(II)-heme a is bound at residue His-480.

Belongs to the heme-copper respiratory oxidase family. As to quaternary structure, component of the cytochrome c oxidase (complex IV, CIV), a multisubunit enzyme composed of a catalytic core of 3 subunits and several supernumerary subunits. The complex exists as a monomer or a dimer and forms supercomplexes (SCs) in the inner mitochondrial membrane with ubiquinol-cytochrome c oxidoreductase (cytochrome b-c1 complex, complex III, CIII). Requires heme as cofactor. It depends on Cu cation as a cofactor.

It is found in the mitochondrion inner membrane. It catalyses the reaction 4 Fe(II)-[cytochrome c] + O2 + 8 H(+)(in) = 4 Fe(III)-[cytochrome c] + 2 H2O + 4 H(+)(out). The protein operates within energy metabolism; oxidative phosphorylation. Functionally, component of the cytochrome c oxidase, the last enzyme in the mitochondrial electron transport chain which drives oxidative phosphorylation. The respiratory chain contains 3 multisubunit complexes succinate dehydrogenase (complex II, CII), ubiquinol-cytochrome c oxidoreductase (cytochrome b-c1 complex, complex III, CIII) and cytochrome c oxidase (complex IV, CIV), that cooperate to transfer electrons derived from NADH and succinate to molecular oxygen, creating an electrochemical gradient over the inner membrane that drives transmembrane transport and the ATP synthase. Cytochrome c oxidase is the component of the respiratory chain that catalyzes the reduction of oxygen to water. Electrons originating from reduced cytochrome c in the intermembrane space (IMS) are transferred via the dinuclear copper A center (CU(A)) of subunit 2 and heme A of subunit 1 to the active site in subunit 1, a binuclear center (BNC) formed by heme A3 and copper B (CU(B)). The BNC reduces molecular oxygen to 2 water molecules using 4 electrons from cytochrome c in the IMS and 4 protons from the mitochondrial matrix. The protein is Cytochrome c oxidase subunit 1 (COI) of Paramecium tetraurelia.